We begin with the raw amino-acid sequence, 238 residues long: Major prion protein (238 aa).

Positions Met-1–Cys-15 are cleaved as a signal peptide. The tract at residues Lys-16–Ser-215 is interaction with GRB2, ERI3 and SYN1. Residues Arg-18–Ser-93 are disordered. 4 repeat units span residues Pro-44–Gln-52, Pro-53–Gln-60, Pro-61–Gln-68, and Pro-69–Gln-76. Residues Pro-44–Gln-83 are 4 X 8 AA tandem repeats of P-H-G-G-G-W-G-Q. Residues Gln-45 to Thr-80 show a composition bias toward gly residues. Residues Gly-47, Gly-48, His-54, Gly-55, Gly-56, His-62, Gly-63, Gly-64, His-70, Gly-71, and Gly-72 each coordinate Cu(2+). Positions Gln-83–Ser-93 are enriched in basic residues. Cysteines 164 and 199 form a disulfide. N-linked (GlcNAc...) asparagine glycans are attached at residues Asn-166 and Asn-182. A lipid anchor (GPI-anchor amidated serine) is attached at Ser-215. Residues Ser-216 to Gly-238 constitute a propeptide, removed in mature form.

Belongs to the prion family. Monomer and homodimer. Has a tendency to aggregate into amyloid fibrils containing a cross-beta spine, formed by a steric zipper of superposed beta-strands. Soluble oligomers may represent an intermediate stage on the path to fibril formation. Copper binding may promote oligomerization. Interacts with GRB2, APP, ERI3/PRNPIP and SYN1. Mislocalized cytosolically exposed PrP interacts with MGRN1; this interaction alters MGRN1 subcellular location and causes lysosomal enlargement. Interacts with KIAA1191.

Its subcellular location is the cell membrane. The protein localises to the golgi apparatus. Its function is as follows. Its primary physiological function is unclear. Has cytoprotective activity against internal or environmental stresses. May play a role in neuronal development and synaptic plasticity. May be required for neuronal myelin sheath maintenance. May play a role in iron uptake and iron homeostasis. Soluble oligomers are toxic to cultured neuroblastoma cells and induce apoptosis (in vitro). Association with GPC1 (via its heparan sulfate chains) targets PRNP to lipid rafts. Also provides Cu(2+) or Zn(2+) for the ascorbate-mediated GPC1 deaminase degradation of its heparan sulfate side chains. The polypeptide is Major prion protein (PRNP) (Theropithecus gelada (Gelada baboon)).